Here is a 105-residue protein sequence, read N- to C-terminus: Replication restart protein PriB (105 aa).

Positions 1 to 102 (MTTNRLVLSG…LHAEQIELID (102 aa)) constitute an SSB domain.

Belongs to the PriB family. Homodimer. Interacts with PriA and DnaT. Component of the replication restart primosome. Primosome assembly occurs via a 'hand-off' mechanism. PriA binds to replication forks, subsequently PriB then DnaT bind; DnaT then displaces ssDNA to generate the helicase loading substrate.

Its function is as follows. Involved in the restart of stalled replication forks, which reloads the replicative helicase on sites other than the origin of replication; the PriA-PriB pathway is the major replication restart pathway. During primosome assembly it facilitates complex formation between PriA and DnaT on DNA; stabilizes PriA on DNA. Stimulates the DNA unwinding activity of PriA helicase. This Photorhabdus laumondii subsp. laumondii (strain DSM 15139 / CIP 105565 / TT01) (Photorhabdus luminescens subsp. laumondii) protein is Replication restart protein PriB.